A 435-amino-acid chain; its full sequence is Adenylosuccinate synthetase (435 aa).

GTP contacts are provided by residues 17 to 23 (GDEGKGK) and 45 to 47 (GHT). The active-site Proton acceptor is Asp-18. The Mg(2+) site is built by Asp-18 and Gly-45. IMP-binding positions include 18 to 21 (DEGK), 43 to 46 (NAGH), Thr-135, Arg-149, Gln-230, Thr-245, and Arg-309. The Proton donor role is filled by His-46. 305–311 (TVSGRAR) lines the substrate pocket. Residues Arg-311, 337-339 (LLD), and 419-421 (SVG) contribute to the GTP site.

It belongs to the adenylosuccinate synthetase family. As to quaternary structure, homodimer. Mg(2+) is required as a cofactor.

It localises to the cytoplasm. The enzyme catalyses IMP + L-aspartate + GTP = N(6)-(1,2-dicarboxyethyl)-AMP + GDP + phosphate + 2 H(+). It participates in purine metabolism; AMP biosynthesis via de novo pathway; AMP from IMP: step 1/2. In terms of biological role, plays an important role in the de novo pathway of purine nucleotide biosynthesis. Catalyzes the first committed step in the biosynthesis of AMP from IMP. This Spiroplasma citri protein is Adenylosuccinate synthetase.